The sequence spans 1413 residues: DNA-directed RNA polymerase subunit beta' (1413 aa).

Zn(2+) contacts are provided by cysteine 70, cysteine 72, cysteine 85, and cysteine 88. Mg(2+) contacts are provided by aspartate 460, aspartate 462, and aspartate 464. Zn(2+) contacts are provided by cysteine 819, cysteine 893, cysteine 900, and cysteine 903. The segment at 1392-1413 is disordered; it reads EEAFDFGTPSAPAEEPQHPAAE.

The protein belongs to the RNA polymerase beta' chain family. In terms of assembly, the RNAP catalytic core consists of 2 alpha, 1 beta, 1 beta' and 1 omega subunit. When a sigma factor is associated with the core the holoenzyme is formed, which can initiate transcription. Mg(2+) serves as cofactor. The cofactor is Zn(2+).

It carries out the reaction RNA(n) + a ribonucleoside 5'-triphosphate = RNA(n+1) + diphosphate. Its function is as follows. DNA-dependent RNA polymerase catalyzes the transcription of DNA into RNA using the four ribonucleoside triphosphates as substrates. The polypeptide is DNA-directed RNA polymerase subunit beta' (Burkholderia orbicola (strain MC0-3)).